An 87-amino-acid chain; its full sequence is Small ribosomal subunit protein uS15 (87 aa).

It belongs to the universal ribosomal protein uS15 family. As to quaternary structure, part of the 30S ribosomal subunit. Forms a bridge to the 50S subunit in the 70S ribosome, contacting the 23S rRNA.

Its function is as follows. One of the primary rRNA binding proteins, it binds directly to 16S rRNA where it helps nucleate assembly of the platform of the 30S subunit by binding and bridging several RNA helices of the 16S rRNA. In terms of biological role, forms an intersubunit bridge (bridge B4) with the 23S rRNA of the 50S subunit in the ribosome. This is Small ribosomal subunit protein uS15 from Dehalococcoides mccartyi (strain ATCC BAA-2100 / JCM 16839 / KCTC 5957 / BAV1).